Consider the following 150-residue polypeptide: Leukotriene C4 synthase (150 aa).

The Cytoplasmic segment spans residues 1 to 6 (MKDEVA). The helical transmembrane segment at 7-27 (LLATVTLLGVLLQAYFSLQVI) threads the bilayer. Residues 28–48 (RARRAHRVSPPLTTGPPEFER) are Lumenal-facing. Arg30 is a binding site for glutathione. Arg31 functions as the Proton donor in the catalytic mechanism. Ser36 bears the Phosphoserine mark. A helical membrane pass occupies residues 49 to 69 (VYRAQVNCSEYFPLFLATLWV). Glutathione contacts are provided by residues 51–55 (RAQVN) and 58–59 (EY). At 70–73 (AGVY) the chain is on the cytoplasmic side. A helical transmembrane segment spans residues 74–94 (FHEGAAALCGLVYLFTRLRYF). 93–97 (YFWGY) contacts glutathione. The Lumenal portion of the chain corresponds to 95-104 (WGYARSAQLR). Arg104 acts as the Proton acceptor in catalysis. Residues 105–124 (LAPLYASARALWLLLALATL) traverse the membrane as a helical segment. The Cytoplasmic segment spans residues 125 to 150 (GLLAHFLPAAARAALLRLLRALLRTA).

The protein belongs to the MAPEG family. Homotrimer. Interacts with ALOX5AP and ALOX5. Post-translationally, phosphorylation at Ser-36 by RPS6KB1 inhibits the leukotriene-C4 synthase activity.

Its subcellular location is the nucleus outer membrane. It localises to the endoplasmic reticulum membrane. The protein localises to the nucleus membrane. It carries out the reaction leukotriene C4 = leukotriene A4 + glutathione. It catalyses the reaction (13S,14S)-epoxy-(4Z,7Z,9E,11E,16Z,19Z)-docosahexaenoate + glutathione = (13R)-S-glutathionyl-(14S)-hydroxy-(4Z,7Z,9E,11E,16Z,19Z)-docosahexaenoate. It functions in the pathway lipid metabolism; leukotriene C4 biosynthesis. Inhibited by MK886. Catalyzes the conjugation of leukotriene A4 with reduced glutathione (GSH) to form leukotriene C4 with high specificity. Can also catalyze the transfer of a glutathionyl group from glutathione (GSH) to 13(S),14(S)-epoxy-docosahexaenoic acid to form maresin conjugate in tissue regeneration 1 (MCTR1), a bioactive lipid mediator that possess potent anti-inflammatory and proresolving actions. The polypeptide is Leukotriene C4 synthase (LTC4S) (Cavia porcellus (Guinea pig)).